A 386-amino-acid chain; its full sequence is Alanine racemase (386 aa).

The active-site Proton acceptor; specific for D-alanine is the lysine 38. At lysine 38 the chain carries N6-(pyridoxal phosphate)lysine. Arginine 136 is a binding site for substrate. The Proton acceptor; specific for L-alanine role is filled by tyrosine 267. Methionine 315 serves as a coordination point for substrate.

Belongs to the alanine racemase family. Pyridoxal 5'-phosphate is required as a cofactor.

It catalyses the reaction L-alanine = D-alanine. Its pathway is amino-acid biosynthesis; D-alanine biosynthesis; D-alanine from L-alanine: step 1/1. Functionally, catalyzes the interconversion of L-alanine and D-alanine. May also act on other amino acids. The chain is Alanine racemase (alr) from Clostridium perfringens (strain ATCC 13124 / DSM 756 / JCM 1290 / NCIMB 6125 / NCTC 8237 / Type A).